We begin with the raw amino-acid sequence, 294 residues long: Autophagy protein 5 (294 aa).

A Glycyl lysine isopeptide (Lys-Gly) (interchain with G-Cter in ATG12) cross-link involves residue Lys149.

It belongs to the ATG5 family. As to quaternary structure, conjugated with ATG12. The ATG5-ATG12 conjugate forms a complex with several units of ATG16. The ATG12-ATG5 conjugate also associates with ATG3. Post-translationally, conjugated to ATG12; which is essential for autophagy. Conjugation with ATG12 involves ATG7 as an E1-like activating enzyme and ATG10 as an E2-like conjugating enzyme.

It localises to the preautophagosomal structure membrane. Involved in cytoplasm to vacuole transport (Cvt) and autophagic vesicle formation. Autophagy is essential for maintenance of amino acid levels and protein synthesis under nitrogen starvation. Required for selective autophagic degradation of the nucleus (nucleophagy). Also required for mitophagy, which eliminates defective or superfluous mitochondria in order to fulfill cellular energy requirements and prevent excess ROS production. Conjugation with ATG12, through a ubiquitin-like conjugating system involving ATG7 as an E1-like activating enzyme and ATG10 as an E2-like conjugating enzyme, is essential for its function. The ATG12-ATG5 conjugate acts as an E3-like enzyme which is required for lipidation of ATG8 and ATG8 association to the vesicle membranes. ATG12-ATG5 rearranges the ATG3 catalytic center and enhances its E2 activity. Plays a role in the regulation of filamentous growth and chronological longevity. The protein is Autophagy protein 5 (ATG5) of Saccharomyces cerevisiae (strain YJM789) (Baker's yeast).